A 167-amino-acid chain; its full sequence is uncharacterized protein (167 aa).

This is an uncharacterized protein from Methanocaldococcus jannaschii (strain ATCC 43067 / DSM 2661 / JAL-1 / JCM 10045 / NBRC 100440) (Methanococcus jannaschii).